A 314-amino-acid polypeptide reads, in one-letter code: Homoserine O-succinyltransferase (314 aa).

The Acyl-thioester intermediate role is filled by cysteine 142. The substrate site is built by lysine 163 and serine 192. Catalysis depends on histidine 235, which acts as the Proton acceptor. The active site involves glutamate 237. Arginine 249 is a substrate binding site.

It belongs to the MetA family.

It localises to the cytoplasm. It carries out the reaction L-homoserine + succinyl-CoA = O-succinyl-L-homoserine + CoA. It functions in the pathway amino-acid biosynthesis; L-methionine biosynthesis via de novo pathway; O-succinyl-L-homoserine from L-homoserine: step 1/1. Transfers a succinyl group from succinyl-CoA to L-homoserine, forming succinyl-L-homoserine. This Aeromonas salmonicida (strain A449) protein is Homoserine O-succinyltransferase.